A 1449-amino-acid polypeptide reads, in one-letter code: VWFA and cache domain-containing protein CG16868 (1449 aa).

The first 23 residues, 1-23 (MWPNSNLNAVLLILAVLACPTSS), serve as a signal peptide directing secretion. The Extracellular portion of the chain corresponds to 24–1220 (QHVPLAMANS…NPQREQHAYS (1197 aa)). N-linked (GlcNAc...) asparagine glycosylation is found at N32, N112, N153, N407, N447, and N497. The VWFA domain occupies 320–541 (FVLFLIDVGS…TSLPQTSSRI (222 aa)). Positions 557 to 639 (VHPPVVDADS…PRPLIQRETS (83 aa)) constitute a Cache 1 domain. Residues N649, N668, and N707 are each glycosylated (N-linked (GlcNAc...) asparagine). Positions 889–934 (TAPYLDAGGAGYIITIAHTIFEGKAHALHSAQQDRPVAVVALDVPY) constitute a Cache 2 domain. Residues N1015, N1025, N1059, and N1111 are each glycosylated (N-linked (GlcNAc...) asparagine). Residues 1221–1241 (AFGPLGGAIVVLVMVIGFAIY) traverse the membrane as a helical segment. Residues 1242 to 1449 (CYRHNLDAQT…VHRHMETAES (208 aa)) lie on the Cytoplasmic side of the membrane. 2 disordered regions span residues 1307-1339 (YHVS…SSDQ) and 1352-1416 (DKRH…GGSV). Low complexity predominate over residues 1359 to 1369 (DTMSISTSISS). Positions 1370-1392 (PTNRQQSSSQPNTHPYLSNQPTS) are enriched in polar residues.

It belongs to the calcium channel subunit alpha-2/delta family.

The protein localises to the membrane. The chain is VWFA and cache domain-containing protein CG16868 from Drosophila melanogaster (Fruit fly).